A 467-amino-acid chain; its full sequence is tRNA modification GTPase MnmE (467 aa).

(6S)-5-formyl-5,6,7,8-tetrahydrofolate-binding residues include R30, E92, and R131. Residues 226 to 388 (GLKVAIIGRP…LEAAILNAVN (163 aa)) form the TrmE-type G domain. Residue N236 coordinates K(+). GTP-binding positions include 236–241 (NVGKSS), 255–261 (TDLPGTT), and 280–283 (DTAG). Mg(2+) is bound at residue S240. Residues T255, L257, and T260 each coordinate K(+). T261 is a binding site for Mg(2+). K467 provides a ligand contact to (6S)-5-formyl-5,6,7,8-tetrahydrofolate.

The protein belongs to the TRAFAC class TrmE-Era-EngA-EngB-Septin-like GTPase superfamily. TrmE GTPase family. As to quaternary structure, homodimer. Heterotetramer of two MnmE and two MnmG subunits. It depends on K(+) as a cofactor.

The protein localises to the cytoplasm. In terms of biological role, exhibits a very high intrinsic GTPase hydrolysis rate. Involved in the addition of a carboxymethylaminomethyl (cmnm) group at the wobble position (U34) of certain tRNAs, forming tRNA-cmnm(5)s(2)U34. The polypeptide is tRNA modification GTPase MnmE (Trichodesmium erythraeum (strain IMS101)).